Consider the following 223-residue polypeptide: MSAQLLILSHVVLLQLIVAQLGPKIGKQFLKPKQCEITNQTVYDFHAQMLNGAQRSLTEYRNKVLLIVNVATYCAYTMQYRDFNPILGSNSNGTLNILGFPCNQFYLQEPAENHELLNGLKYVRPGHGWEPHKNMHIFGKLEVNGENDHPLYKFLKERCPPTVPVIGKRHQLIYDPIGTNDVIWNFEKFLVDKKGRPRYRFHPENWVQGTAVKPYIDELEREI.

The first 19 residues, Met1–Ala19, serve as a signal peptide directing secretion. A glycan (N-linked (GlcNAc...) asparagine) is linked at Asn39. Residue Cys74 is part of the active site. Asn92 carries an N-linked (GlcNAc...) asparagine glycan.

The protein belongs to the glutathione peroxidase family. Homotetramer.

The protein resides in the secreted. It carries out the reaction 2 glutathione + H2O2 = glutathione disulfide + 2 H2O. Its function is as follows. Could inhibit the oxidative burst of leukocytes and neutralize the secondary products of lipid peroxidation, thus providing the resistance of these parasites to immune effector mechanisms and their persistence in the mammalian host. It may also be involved in the formation of cross-linking residues such as dityrosine, trityrosine and isotrityrosine identified in cuticular collagen. Highly cross-linked external cortex may also serve to protect the parasite from immune attack. This chain is Cuticular glutathione peroxidase, found in Wuchereria bancrofti.